Here is a 732-residue protein sequence, read N- to C-terminus: Elongation factor 2 (732 aa).

In terms of domain architecture, tr-type G spans 19 to 260 (ERIRNIGIAA…MVVRHLPSPI (242 aa)). Residues 28-35 (AHIDHGKT), 94-98 (DTPGH), and 148-151 (NKVD) contribute to the GTP site. His-597 bears the Diphthamide mark.

This sequence belongs to the TRAFAC class translation factor GTPase superfamily. Classic translation factor GTPase family. EF-G/EF-2 subfamily.

It localises to the cytoplasm. Catalyzes the GTP-dependent ribosomal translocation step during translation elongation. During this step, the ribosome changes from the pre-translocational (PRE) to the post-translocational (POST) state as the newly formed A-site-bound peptidyl-tRNA and P-site-bound deacylated tRNA move to the P and E sites, respectively. Catalyzes the coordinated movement of the two tRNA molecules, the mRNA and conformational changes in the ribosome. The protein is Elongation factor 2 (fusA) of Pyrococcus horikoshii (strain ATCC 700860 / DSM 12428 / JCM 9974 / NBRC 100139 / OT-3).